We begin with the raw amino-acid sequence, 233 residues long: MDDNLYRQRAAEHALRHVESGMTIGLGTGSTATFMLYGLAARLADGRLQRVTGVPTSEVTAALARELGIPLTTLDRQPHLDLALDGADEIDPQLRLIKGLGGAMLREKIVAASAARFVVMAAVSKCVERLGERSPLPVEVVAFGLPLCARRLKALGGAPALRRDRSGAPFVTDEGNLILDCNFGIIADPEALAASICAIPGVVAHGLFLGMASLAVIAGPDGIVELHAPSARQ.

Substrate is bound by residues 28–31, 85–88, and 98–101; these read TGST, DGAD, and KGLG. Residue Glu-107 is the Proton acceptor of the active site. Lys-125 contacts substrate.

The protein belongs to the ribose 5-phosphate isomerase family. In terms of assembly, homodimer.

It catalyses the reaction aldehydo-D-ribose 5-phosphate = D-ribulose 5-phosphate. It functions in the pathway carbohydrate degradation; pentose phosphate pathway; D-ribose 5-phosphate from D-ribulose 5-phosphate (non-oxidative stage): step 1/1. In terms of biological role, catalyzes the reversible conversion of ribose-5-phosphate to ribulose 5-phosphate. This is Ribose-5-phosphate isomerase A from Roseiflexus sp. (strain RS-1).